A 359-amino-acid polypeptide reads, in one-letter code: Putative gluconeogenesis factor (359 aa).

Residues 317–359 form a disordered region; sequence VGNQDSSAPTVAATEQIRLDGKRPQTGVNGPVGKGPRGDDAWR.

This sequence belongs to the gluconeogenesis factor family.

It localises to the cytoplasm. Its function is as follows. Required for morphogenesis under gluconeogenic growth conditions. This is Putative gluconeogenesis factor from Mycobacterium leprae (strain TN).